The following is a 446-amino-acid chain: Glycogen synthase (446 aa).

Arg-15 serves as a coordination point for ADP-alpha-D-glucose.

Belongs to the glycosyltransferase 1 family. Bacterial/plant glycogen synthase subfamily.

It catalyses the reaction [(1-&gt;4)-alpha-D-glucosyl](n) + ADP-alpha-D-glucose = [(1-&gt;4)-alpha-D-glucosyl](n+1) + ADP + H(+). The protein operates within glycan biosynthesis; glycogen biosynthesis. Synthesizes alpha-1,4-glucan chains using ADP-glucose. The polypeptide is Glycogen synthase (Deinococcus deserti (strain DSM 17065 / CIP 109153 / LMG 22923 / VCD115)).